We begin with the raw amino-acid sequence, 552 residues long: Chromosomal replication initiator protein DnaA (552 aa).

The tract at residues 1–90 is domain I, interacts with DnaA modulators; it reads MWNETWNEIT…FTVAVTVDPT (90 aa). A domain II region spans residues 90–210; the sequence is TLDVIQDLPH…KPAHDPDRNG (121 aa). Residues 113–213 are disordered; the sequence is EHPHYSPVSQ…HDPDRNGSLN (101 aa). Low complexity predominate over residues 155–170; the sequence is PQPSQSSQSAQQQPAQ. Positions 211–427 are domain III, AAA+ region; it reads SLNPRYTFDT…GAFIRVSAYA (217 aa). Gly255, Gly257, Lys258, and Thr259 together coordinate ATP. The segment at 428 to 552 is domain IV, binds dsDNA; the sequence is SLNEAPINMA…TQQIKSSDRA (125 aa).

The protein belongs to the DnaA family. In terms of assembly, oligomerizes as a right-handed, spiral filament on DNA at oriC.

It localises to the cytoplasm. Functionally, plays an essential role in the initiation and regulation of chromosomal replication. ATP-DnaA binds to the origin of replication (oriC) to initiate formation of the DNA replication initiation complex once per cell cycle. Binds the DnaA box (a 9 base pair repeat at the origin) and separates the double-stranded (ds)DNA. Forms a right-handed helical filament on oriC DNA; dsDNA binds to the exterior of the filament while single-stranded (ss)DNA is stabiized in the filament's interior. The ATP-DnaA-oriC complex binds and stabilizes one strand of the AT-rich DNA unwinding element (DUE), permitting loading of DNA polymerase. After initiation quickly degrades to an ADP-DnaA complex that is not apt for DNA replication. Binds acidic phospholipids. The chain is Chromosomal replication initiator protein DnaA from Corynebacterium diphtheriae (strain ATCC 700971 / NCTC 13129 / Biotype gravis).